A 94-amino-acid polypeptide reads, in one-letter code: Large ribosomal subunit protein bL25 (94 aa).

It belongs to the bacterial ribosomal protein bL25 family. As to quaternary structure, part of the 50S ribosomal subunit; part of the 5S rRNA/L5/L18/L25 subcomplex. Contacts the 5S rRNA. Binds to the 5S rRNA independently of L5 and L18.

Its function is as follows. This is one of the proteins that binds to the 5S RNA in the ribosome where it forms part of the central protuberance. In Erwinia tasmaniensis (strain DSM 17950 / CFBP 7177 / CIP 109463 / NCPPB 4357 / Et1/99), this protein is Large ribosomal subunit protein bL25.